We begin with the raw amino-acid sequence, 324 residues long: Acetyl-coenzyme A carboxylase carboxyl transferase subunit alpha (324 aa).

One can recognise a CoA carboxyltransferase C-terminal domain in the interval 37-291; sequence KLERRLDKLK…QNFILQEWLR (255 aa).

Belongs to the AccA family. Acetyl-CoA carboxylase is a heterohexamer composed of biotin carboxyl carrier protein (AccB), biotin carboxylase (AccC) and two subunits each of ACCase subunit alpha (AccA) and ACCase subunit beta (AccD).

Its subcellular location is the cytoplasm. It carries out the reaction N(6)-carboxybiotinyl-L-lysyl-[protein] + acetyl-CoA = N(6)-biotinyl-L-lysyl-[protein] + malonyl-CoA. Its pathway is lipid metabolism; malonyl-CoA biosynthesis; malonyl-CoA from acetyl-CoA: step 1/1. In terms of biological role, component of the acetyl coenzyme A carboxylase (ACC) complex. First, biotin carboxylase catalyzes the carboxylation of biotin on its carrier protein (BCCP) and then the CO(2) group is transferred by the carboxyltransferase to acetyl-CoA to form malonyl-CoA. The polypeptide is Acetyl-coenzyme A carboxylase carboxyl transferase subunit alpha (Chlamydia caviae (strain ATCC VR-813 / DSM 19441 / 03DC25 / GPIC) (Chlamydophila caviae)).